We begin with the raw amino-acid sequence, 38 residues long: RapG inhibitor (38 aa).

Positions 1 to 33 (MKRFLIGAGVAAVILSGWFIADHQTHSQEMKVA) are excised as a propeptide.

Belongs to the Phr family. In terms of processing, contains a predicted signal peptide cleavage site in the N-terminal region, however the propeptide is probably subject to only one processing event, at the N-terminal end of the mature peptide.

The protein resides in the secreted. Its subcellular location is the cytoplasm. Its function is as follows. Signaling molecule involved in the regulation of expression of DegU-controlled genes. Secreted during production, but the mature peptide acts intracellularly, indicating that it needs to be imported into the cell to function. Stimulates the DegU-dependent expression of aprE, an extracellular alkaline protease. Acts by inhibiting RapG activity. At high concentrations, represses the DegS-dependent aprE expression. In Bacillus subtilis (strain 168), this protein is RapG inhibitor (phrG).